The sequence spans 417 residues: NADP-specific glutamate dehydrogenase A1 (417 aa).

Residue Lys105 is part of the active site.

It belongs to the Glu/Leu/Phe/Val dehydrogenases family. Homohexamer.

The enzyme catalyses L-glutamate + NADP(+) + H2O = 2-oxoglutarate + NH4(+) + NADPH + H(+). The polypeptide is NADP-specific glutamate dehydrogenase A1 (gdhA1) (Halobacterium salinarum (Halobacterium halobium)).